We begin with the raw amino-acid sequence, 91 residues long: Small ribosomal subunit protein uS17 (91 aa).

It belongs to the universal ribosomal protein uS17 family. As to quaternary structure, part of the 30S ribosomal subunit.

Functionally, one of the primary rRNA binding proteins, it binds specifically to the 5'-end of 16S ribosomal RNA. In Salinispora arenicola (strain CNS-205), this protein is Small ribosomal subunit protein uS17.